The sequence spans 177 residues: uncharacterized protein (177 aa).

This sequence to Synechocystis PCC 6803 slr1290 and sll0925.

This is an uncharacterized protein from Synechocystis sp. (strain ATCC 27184 / PCC 6803 / Kazusa).